A 398-amino-acid polypeptide reads, in one-letter code: Phospholipase C (398 aa).

A signal peptide spans 1-28 (MKRKICKALICATLATSLWAGASTKVYA). Positions 29, 39, 84, 96, 154, 158, 164, 176, and 180 each coordinate Zn(2+). The 250-residue stretch at 29–278 (WDGKIDGTGT…HDVSEGNDPS (250 aa)) folds into the Zn-dependent PLC domain. Residues 275–283 (NDPSVGKNV) are linker. The PLAT domain maps to 284–398 (KELVAYISTS…ISGNSTYNIK (115 aa)). Residues aspartate 297, glycine 299, threonine 300, aspartate 301, aspartate 321, asparagine 322, glycine 324, asparagine 325, aspartate 326, aspartate 364, and alanine 365 each coordinate Ca(2+).

Belongs to the bacterial zinc-metallophospholipase C family. Requires Ca(2+) as cofactor. It depends on Zn(2+) as a cofactor.

It is found in the secreted. The catalysed reaction is a 1,2-diacyl-sn-glycero-3-phosphocholine + H2O = phosphocholine + a 1,2-diacyl-sn-glycerol + H(+). Functionally, bacterial hemolysins are exotoxins that attack blood cell membranes and cause cell rupture. Constitutes an essential virulence factor in gas gangrene. Binds to eukaryotic membranes where it hydrolyzes both phosphatidylcholine and sphingomyelin. The diacylglycerol produced can activate both the arachidonic acid pathway, leading to modulation of the inflammatory response cascade and thrombosis, and protein kinase C, leading to activation of eukaryotic phospholipases and further membrane damage. Acts on human and mouse erythrocytes, but not on rabbit or horse erythrocytes. This chain is Phospholipase C (plc), found in Clostridium perfringens (strain 13 / Type A).